The chain runs to 342 residues: MVLVKQVRLGNSGLKISPIVIGCMSYGSKKWADWVIEDKTQIFKIMKHCYDKGLRTFDTADFYSNGLSERIIKEFLEYYSIKRETVVIMTKIYFPVDETLDLHHNFTLNEFEELDLSNQRGLSRKHIIAGVENSVKRLGTYIDLLQIHRLDHETPMKEIMKALNDVVEAGHVRYIGASSMLATEFAELQFTADKYGWFQFISSQSYYNLLYREDERELIPFAKRHNIGLLPWSPNARGMLTRPLNQSTDRIKSDPTFKSLHLDNLEEEQKEIINRVEKVSKDKKVSMAMLSIAWVLHKGCHPIVGLNTTARVDEAIAALQVTLTEEEIKYLEEPYKPQRQRC.

Belongs to the aldo/keto reductase family. Aldo/keto reductase 2 subfamily.

Its function is as follows. Putative aryl-alcohol dehydrogenase. This Saccharomyces cerevisiae (strain ATCC 204508 / S288c) (Baker's yeast) protein is Putative aryl-alcohol dehydrogenase AAD16.